A 380-amino-acid polypeptide reads, in one-letter code: MAPWTLWRCCQRVVGWVPVLFITFVVVWSYYAYVVELCVSTISRTGEKGKTVVYLVAFHLFFVMFVWSYWMTIFTSPASPSKEFYLSNSEKERYEKEFSQERQQDILRRAARDLPIYTTSASKAIRYCEKCQLIKPDRAHHCSACDRCVLKMDHHCPWVNNCVGFTNYKFFMLFLLYSLLYCLFVAATVLEYFIKFWTLCRRKSTENCPKNEPTVLNFPSAKFHVLFLFFVSAMFFVSVLSLFSYHCWLVGKNRTTIESFRAPMFSYGIDGNGFSLGCSKNWRQVFGDEKKYWLVPIFSSLGDGCSFPARLVGMDPEQASVANQSDYVRSIGSNQPFPIKPLSESKNRLLDSESQWLENGAEEGVTKSGTNNHVTVEIEN.

Residues 1-14 (MAPWTLWRCCQRVV) are Cytoplasmic-facing. Residues 15-35 (GWVPVLFITFVVVWSYYAYVV) traverse the membrane as a helical segment. The Lumenal segment spans residues 36-53 (ELCVSTISRTGEKGKTVV). A helical transmembrane segment spans residues 54 to 74 (YLVAFHLFFVMFVWSYWMTIF). The Cytoplasmic segment spans residues 75-169 (TSPASPSKEF…NNCVGFTNYK (95 aa)). Residues 126–176 (RYCEKCQLIKPDRAHHCSACDRCVLKMDHHCPWVNNCVGFTNYKFFMLFLL) enclose the DHHC domain. C128 and C131 together coordinate Zn(2+). Substrate-binding positions include K135 and 140-143 (HHCS). H141, C142, C145, C148, and H155 together coordinate Zn(2+). The S-palmitoyl cysteine intermediate role is filled by C156. Residue C162 participates in Zn(2+) binding. A helical transmembrane segment spans residues 170-190 (FFMLFLLYSLLYCLFVAATVL). Topologically, residues 191 to 222 (EYFIKFWTLCRRKSTENCPKNEPTVLNFPSAK) are lumenal. Residues 223 to 246 (FHVLFLFFVSAMFFVSVLSLFSYH) traverse the membrane as a helical segment. The Cytoplasmic portion of the chain corresponds to 247–380 (CWLVGKNRTT…NNHVTVEIEN (134 aa)). Residues S320, S345, and S354 each carry the phosphoserine modification.

Belongs to the DHHC palmitoyltransferase family. In terms of processing, autopalmitoylated (in vitro). Highest levels in lung.

It is found in the golgi apparatus membrane. Its subcellular location is the cell membrane. It localises to the cytoplasm. The protein localises to the perinuclear region. The protein resides in the endoplasmic reticulum membrane. It is found in the endoplasmic reticulum-Golgi intermediate compartment membrane. It catalyses the reaction L-cysteinyl-[protein] + hexadecanoyl-CoA = S-hexadecanoyl-L-cysteinyl-[protein] + CoA. The catalysed reaction is L-cysteinyl-[protein] + tetradecanoyl-CoA = S-tetradecanoyl-L-cysteinyl-[protein] + CoA. It carries out the reaction L-cysteinyl-[protein] + octadecanoyl-CoA = S-octadecanoyl-L-cysteinyl-[protein] + CoA. Its function is as follows. Palmitoyltransferase that could catalyze the addition of palmitate onto various protein substrates. Catalyzes palmitoylation of Cys residues in the cytoplasmic C-terminus of EGFR, and modulates the duration of EGFR signaling by modulating palmitoylation-dependent EGFR internalization and degradation. Has a preference for acyl-CoA with C16 fatty acid chains. Can also utilize acyl-CoA with C14 and C18 fatty acid chains. May palmitoylate CALHM1 subunit of gustatory voltage-gated ion channels and modulate channel gating and kinetics. The protein is Palmitoyltransferase ZDHHC20 of Mus musculus (Mouse).